A 770-amino-acid chain; its full sequence is Amyloid-beta precursor protein (770 aa).

Positions Met-1 to Ala-17 are cleaved as a signal peptide. Over Leu-18–Ala-701 the chain is Extracellular. The segment at Leu-28–Val-123 is GFLD subdomain. An E1 domain is found at Leu-28 to Leu-189. Intrachain disulfides connect Cys-38-Cys-62, Cys-73-Cys-117, Cys-98-Cys-105, Cys-133-Cys-187, Cys-144-Cys-174, and Cys-158-Cys-186. Asn-96 to His-110 contacts heparin. The interval Asp-131 to Leu-189 is cuBD subdomain. Residues Phe-135–Lys-155 form a copper-binding region. Cu(2+)-binding residues include His-147, His-151, and Tyr-168. The tract at residues Gly-181 to Pro-188 is zinc-binding. Zn(2+) is bound by residues Glu-183, Cys-186, and Cys-187. A compositionally biased stretch (acidic residues) spans Ile-196 to Asp-207. The interval Ile-196–Val-283 is disordered. Ser-198 is modified (phosphoserine; by CK2). Residue Ser-206 is modified to Phosphoserine; by CK1. Sulfotyrosine is present on residues Tyr-217 and Tyr-262. The segment covering Val-228–Glu-264 has biased composition (acidic residues). Residues Arg-268–Glu-281 show a composition bias toward low complexity. 3 disulfides stabilise this stretch: Cys-291-Cys-341, Cys-300-Cys-324, and Cys-316-Cys-337. The BPTI/Kunitz inhibitor domain maps to Cys-291–Cys-341. Tyr-336 is subject to Sulfotyrosine. Positions Val-344–Pro-365 match the OX-2 motif. The 192-residue stretch at Ala-374–Leu-565 folds into the E2 domain. Residues Phe-391–Leu-423 are heparin-binding. A Phosphoserine modification is found at Ser-441. The heparin-binding stretch occupies residues Phe-491–Lys-522. Tyr-497 is modified (phosphotyrosine). Residues Ala-523 to Arg-540 form a collagen-binding region. N-linked (GlcNAc...) asparagine glycans are attached at residues Asn-542 and Asn-571. Ser-656 carries an O-linked (Xyl...) (chondroitin sulfate) serine; in L-APP isoforms glycan. Residues His-677 and His-685 each coordinate Cu(2+). Zn(2+) contacts are provided by His-677 and His-685. Positions Val-695–Met-722 are interaction with PSEN1. A helical transmembrane segment spans residues Ile-702–Met-722. Residues Leu-723 to Asn-770 lie on the Cytoplasmic side of the membrane. The short motif at Lys-724–Gly-734 is the Basolateral sorting signal element. A Phosphothreonine modification is found at Thr-729. Phosphoserine; by APP-kinase I is present on Ser-730. The interval His-732–Lys-751 is interaction with G(o)-alpha. Thr-743 bears the Phosphothreonine; by CDK5 and MAPK10 mark. The required for the interaction with KIF5B and for anterograde transport in axons stretch occupies residues Gly-756 to Asn-770. At Tyr-757 the chain carries Phosphotyrosine; by ABL1. Residues Tyr-757 to Tyr-762 carry the YENPXY motif; contains endocytosis signal motif. Residue Lys-763 forms a Glycyl lysine isopeptide (Lys-Gly) (interchain with G-Cter in ubiquitin) linkage.

The protein belongs to the APP family. In terms of assembly, binds, via its C-terminus, to the PID domain of several cytoplasmic proteins, including APBB family members, the APBA family, MAPK8IP1, SHC1 and NUMB and DAB1. Binding to DAB1 inhibits its serine phosphorylation. Interacts (via NPXY motif) with DAB2 (via PID domain); the interaction is impaired by tyrosine phosphorylation of the NPXY motif. Also interacts with GPCR-like protein BPP, APPBP1, IB1, KNS2 (via its TPR domains), APPBP2 (via BaSS) and DDB1. In vitro, it binds MAPT via the MT-binding domains. Associates with microtubules in the presence of ATP and in a kinesin-dependent manner. Interacts, through a C-terminal domain, with GNAO1. Amyloid-beta protein 42 binds CHRNA7 in hippocampal neurons. Amyloid-beta associates with HADH2. Interacts with CPEB1, ANKS1B and AGER. Interacts with ITM2B. Interacts with ITM2C. Interacts with IDE. Can form homodimers; dimerization is enhanced in the presence of Cu(2+) ions. Can form homodimers; this is promoted by heparin binding. Amyloid-beta protein 40 interacts with S100A9. CTF-alpha product of APP interacts with GSAP. Isoform APP695 interacts with SORL1 (via N-terminal ectodomain); this interaction retains APP in the trans-Golgi network and reduces processing into soluble APP-alpha and amyloid-beta peptides. The C99 fragment also interacts with SORL1. Isoform APP751 interacts with SORL1. Isoform APP770 interacts with SORL1. Interacts with PLD3. Interacts with VDAC1. Interacts with NSG1; could regulate APP processing. Amyloid-beta protein 42 interacts with FPR2. Interacts with SYT7. Interacts (via transmembrane region) with PSEN1; the interaction is direct. Interacts with LRRK2. Interacts (via cytoplasmic domain) with KIF5B. Interacts (via C-terminus) with APBB2/FE65L1 (via C-terminus). Interacts (via intracellular domain) with APBB3. In terms of processing, proteolytically processed under normal cellular conditions. Cleavage either by alpha-secretase, beta-secretase or theta-secretase leads to generation and extracellular release of soluble APP peptides, S-APP-alpha and S-APP-beta, and the retention of corresponding membrane-anchored C-terminal fragments, C80, C83 and C99. Subsequent processing of C80 and C83 by gamma-secretase yields P3 peptides. This is the major secretory pathway and is non-amyloidogenic. Alternatively, presenilin/nicastrin-mediated gamma-secretase processing of C99 releases the amyloid-beta proteins, amyloid-beta protein 40 and amyloid-beta protein 42, major components of amyloid plaques, and the cytotoxic C-terminal fragments, gamma-CTF(50), gamma-CTF(57) and gamma-CTF(59). PSEN1 cleavage is more efficient with C83 than with C99 as substrate (in vitro). Amyloid-beta protein 40 and Amyloid-beta protein 42 are cleaved by ACE. Many other minor amyloid-beta peptides, amyloid-beta 1-X peptides, are found in cerebral spinal fluid (CSF) including the amyloid-beta X-15 peptides, produced from the cleavage by alpha-secretase. Post-translationally, proteolytically cleaved by caspases during neuronal apoptosis. Cleavage at Asp-739 by either caspase-3, -8 or -9 results in the production of the neurotoxic C31 peptide and the increased production of amyloid-beta peptides. N-glycosylated. In terms of processing, O-glycosylated. O-linkage of chondroitin sulfate to the L-APP isoforms produces the APP proteoglycan core proteins, the appicans. The chondroitin sulfate chain of appicans contains 4-O-sulfated galactose in the linkage region and chondroitin sulfate E in the repeated disaccharide region. Post-translationally, phosphorylation in the C-terminal on tyrosine, threonine and serine residues is neuron-specific. Phosphorylation can affect APP processing, neuronal differentiation and interaction with other proteins. Phosphorylated on Thr-743 in neuronal cells by Cdc5 kinase and Mapk10, in dividing cells by Cdc2 kinase in a cell-cycle dependent manner with maximal levels at the G2/M phase and, in vitro, by GSK-3-beta. The Thr-743 phosphorylated form causes a conformational change which reduces binding of Fe65 family members. In dopaminergic (DA) neurons, phosphorylation on Thr-743 by LRKK2 promotes the production and the nuclear translocation of the APP intracellular domain (AICD) which induces DA neuron apoptosis. Phosphorylation on Tyr-757 is required for SHC binding. Phosphorylated in the extracellular domain by casein kinases on both soluble and membrane-bound APP. This phosphorylation is inhibited by heparin. Extracellular binding and reduction of copper, results in a corresponding oxidation of Cys-144 and Cys-158, and the formation of a disulfide bond. In terms of processing, trophic-factor deprivation triggers the cleavage of surface APP by beta-secretase to release sAPP-beta which is further cleaved to release an N-terminal fragment of APP (N-APP). Post-translationally, amyloid-beta peptides are degraded by IDE. Sulfated on tyrosine residues. In terms of tissue distribution, expressed in the brain. In the brain, non-L-APP isoforms are expressed in neurons, isoform APP695 being the predominant form. In astrocytes and microglial cells, almost 50% is L-isoform (appican).

Its subcellular location is the cell membrane. It is found in the membrane. The protein resides in the perikaryon. The protein localises to the cell projection. It localises to the growth cone. Its subcellular location is the clathrin-coated pit. It is found in the early endosome. The protein resides in the cytoplasmic vesicle. The protein localises to the endoplasmic reticulum. It localises to the golgi apparatus. Its subcellular location is the cell surface. It is found in the nucleus. The protein resides in the cytoplasm. The protein localises to the secreted. Functionally, functions as a cell surface receptor and performs physiological functions on the surface of neurons relevant to neurite growth, neuronal adhesion and axonogenesis. Interaction between APP molecules on neighboring cells promotes synaptogenesis. Involved in cell mobility and transcription regulation through protein-protein interactions. Can promote transcription activation through binding to APBB1-KAT5 and inhibit Notch signaling through interaction with Numb. Couples to apoptosis-inducing pathways such as those mediated by G(o) and JIP. Inhibits G(o)-alpha ATPase activity. Acts as a kinesin I membrane receptor, mediating the axonal transport of beta-secretase and presenilin 1. By acting as a kinesin I membrane receptor, plays a role in axonal anterograde transport of cargo towards synapses in axons. May be involved in copper homeostasis/oxidative stress through copper ion reduction. Can regulate neurite outgrowth through binding to components of the extracellular matrix such as heparin and collagen I and IV. The splice isoforms that contain the BPTI domain possess protease inhibitor activity. Induces a AGER-dependent pathway that involves activation of p38 MAPK, resulting in internalization of amyloid-beta peptide and leading to mitochondrial dysfunction in cultured mitochondrial dysfunction in cultured cortical neurons. Provides Cu(2+) ions for GPC1 which are required for release of nitric oxide (NO) and subsequent degradation of the heparan sulfate chains on GPC1. Its function is as follows. Amyloid-beta peptides are lipophilic metal chelators with metal-reducing activity. Binds transient metals such as copper, zinc and iron. Rat and mouse amyloid-beta peptides bind only weakly transient metals and have little reducing activity due to substitutions of transient metal chelating residues. Amyloid-beta protein 42 may activate mononuclear phagocytes in the brain and elicits inflammatory responses. Promotes both tau aggregation and TPK II-mediated phosphorylation. Also binds GPC1 in lipid rafts. In terms of biological role, appicans elicit adhesion of neural cells to the extracellular matrix and may regulate neurite outgrowth in the brain. The gamma-CTF peptides as well as the caspase-cleaved peptides, including C31, are potent enhancers of neuronal apoptosis. The chain is Amyloid-beta precursor protein from Rattus norvegicus (Rat).